Consider the following 170-residue polypeptide: Anaphase-promoting complex subunit SWM1 (170 aa).

Basic and acidic residues-rich tracts occupy residues asparagine 48–asparagine 67 and glycine 132–isoleucine 141. Disordered stretches follow at residues asparagine 48–glutamate 81 and leucine 122–isoleucine 141.

It belongs to the APC13 family. As to quaternary structure, the APC/C is composed of at least 13 subunits that stay tightly associated throughout the cell cycle: APC1, APC2, APC4, APC5, APC9, APC11, CDC16, CDC23, CDC26, CDC27, DOC1, MND2 and SWM1. SWM1 interacts directly with CDC23 and APC5, and is required to tether APC9, CDC16, CDC26 and CDC27 to the complex.

It functions in the pathway protein modification; protein ubiquitination. Component of the anaphase promoting complex/cyclosome (APC/C), a cell cycle-regulated E3 ubiquitin-protein ligase complex that controls progression through mitosis and the G1 phase of the cell cycle. The APC/C is thought to confer substrate specificity and, in the presence of ubiquitin-conjugating E2 enzymes, it catalyzes the formation of protein-ubiquitin conjugates that are subsequently degraded by the 26S proteasome. In early mitosis, the APC/C is activated by CDC20 and targets securin PDS1, the B-type cyclin CLB5, and other anaphase inhibitory proteins for proteolysis, thereby triggering the separation of sister chromatids at the metaphase-to-anaphase transition. In late mitosis and in G1, degradation of CLB5 allows activation of the APC/C by CDH1, which is needed to destroy CDC20 and the B-type cyclin CLB2 to allow exit from mitosis and creating the low CDK state necessary for cytokinesis and for reforming prereplicative complexes in G1 prior to another round of replication. SWM1 is required for APC/C activity in meiosis. In Saccharomyces cerevisiae (strain ATCC 204508 / S288c) (Baker's yeast), this protein is Anaphase-promoting complex subunit SWM1 (SWM1).